Reading from the N-terminus, the 263-residue chain is Tryptophan synthase alpha chain (263 aa).

Active-site proton acceptor residues include Glu41 and Asp52.

The protein belongs to the TrpA family. As to quaternary structure, tetramer of two alpha and two beta chains.

The enzyme catalyses (1S,2R)-1-C-(indol-3-yl)glycerol 3-phosphate + L-serine = D-glyceraldehyde 3-phosphate + L-tryptophan + H2O. Its pathway is amino-acid biosynthesis; L-tryptophan biosynthesis; L-tryptophan from chorismate: step 5/5. The alpha subunit is responsible for the aldol cleavage of indoleglycerol phosphate to indole and glyceraldehyde 3-phosphate. The polypeptide is Tryptophan synthase alpha chain (Geobacillus sp. (strain WCH70)).